Consider the following 553-residue polypeptide: Dihydroxy-acid dehydratase (553 aa).

Aspartate 78 provides a ligand contact to Mg(2+). Cysteine 119 contacts [2Fe-2S] cluster. Mg(2+)-binding residues include aspartate 120 and lysine 121. Lysine 121 carries the post-translational modification N6-carboxylysine. Cysteine 193 is a [2Fe-2S] cluster binding site. Glutamate 441 contributes to the Mg(2+) binding site. Serine 467 serves as the catalytic Proton acceptor.

The protein belongs to the IlvD/Edd family. Homodimer. [2Fe-2S] cluster serves as cofactor. Requires Mg(2+) as cofactor.

The enzyme catalyses (2R)-2,3-dihydroxy-3-methylbutanoate = 3-methyl-2-oxobutanoate + H2O. It catalyses the reaction (2R,3R)-2,3-dihydroxy-3-methylpentanoate = (S)-3-methyl-2-oxopentanoate + H2O. Its pathway is amino-acid biosynthesis; L-isoleucine biosynthesis; L-isoleucine from 2-oxobutanoate: step 3/4. The protein operates within amino-acid biosynthesis; L-valine biosynthesis; L-valine from pyruvate: step 3/4. Functions in the biosynthesis of branched-chain amino acids. Catalyzes the dehydration of (2R,3R)-2,3-dihydroxy-3-methylpentanoate (2,3-dihydroxy-3-methylvalerate) into 2-oxo-3-methylpentanoate (2-oxo-3-methylvalerate) and of (2R)-2,3-dihydroxy-3-methylbutanoate (2,3-dihydroxyisovalerate) into 2-oxo-3-methylbutanoate (2-oxoisovalerate), the penultimate precursor to L-isoleucine and L-valine, respectively. The polypeptide is Dihydroxy-acid dehydratase (Geobacter sp. (strain M21)).